The following is a 166-amino-acid chain: Ribosomal RNA large subunit methyltransferase H (166 aa).

S-adenosyl-L-methionine contacts are provided by residues Leu-85, Gly-116, and 135 to 140 (ISKMTF).

It belongs to the RNA methyltransferase RlmH family. In terms of assembly, homodimer.

It is found in the cytoplasm. It carries out the reaction pseudouridine(1915) in 23S rRNA + S-adenosyl-L-methionine = N(3)-methylpseudouridine(1915) in 23S rRNA + S-adenosyl-L-homocysteine + H(+). In terms of biological role, specifically methylates the pseudouridine at position 1915 (m3Psi1915) in 23S rRNA. The protein is Ribosomal RNA large subunit methyltransferase H of Francisella tularensis subsp. holarctica (strain FTNF002-00 / FTA).